We begin with the raw amino-acid sequence, 126 residues long: Small ribosomal subunit protein uS12 (126 aa).

The residue at position 89 (Asp-89) is a 3-methylthioaspartic acid.

It belongs to the universal ribosomal protein uS12 family. In terms of assembly, part of the 30S ribosomal subunit. Contacts proteins S8 and S17. May interact with IF1 in the 30S initiation complex.

In terms of biological role, with S4 and S5 plays an important role in translational accuracy. Its function is as follows. Interacts with and stabilizes bases of the 16S rRNA that are involved in tRNA selection in the A site and with the mRNA backbone. Located at the interface of the 30S and 50S subunits, it traverses the body of the 30S subunit contacting proteins on the other side and probably holding the rRNA structure together. The combined cluster of proteins S8, S12 and S17 appears to hold together the shoulder and platform of the 30S subunit. This Polynucleobacter asymbioticus (strain DSM 18221 / CIP 109841 / QLW-P1DMWA-1) (Polynucleobacter necessarius subsp. asymbioticus) protein is Small ribosomal subunit protein uS12.